Reading from the N-terminus, the 158-residue chain is Cyclic pyranopterin monophosphate synthase (158 aa).

Residues 76 to 78 (LCH) and 114 to 115 (ME) each bind substrate. D129 is a catalytic residue.

The protein belongs to the MoaC family. Homohexamer; trimer of dimers.

The enzyme catalyses (8S)-3',8-cyclo-7,8-dihydroguanosine 5'-triphosphate = cyclic pyranopterin phosphate + diphosphate. Its pathway is cofactor biosynthesis; molybdopterin biosynthesis. Catalyzes the conversion of (8S)-3',8-cyclo-7,8-dihydroguanosine 5'-triphosphate to cyclic pyranopterin monophosphate (cPMP). The polypeptide is Cyclic pyranopterin monophosphate synthase (Shewanella baltica (strain OS223)).